The sequence spans 105 residues: Small ribosomal subunit protein eS10A (105 aa).

This sequence belongs to the eukaryotic ribosomal protein eS10 family. As to quaternary structure, component of the small ribosomal subunit (SSU). Mature yeast ribosomes consist of a small (40S) and a large (60S) subunit. The 40S small subunit contains 1 molecule of ribosomal RNA (18S rRNA) and 33 different proteins (encoded by 57 genes). The large 60S subunit contains 3 rRNA molecules (25S, 5.8S and 5S rRNA) and 46 different proteins (encoded by 81 genes). eS10 interacts with GCN1 (via middle region); this interaction is direct and promotes GCN2 kinase activity. Post-translationally, the N-terminus is not modified.

The protein localises to the cytoplasm. Functionally, component of the ribosome, a large ribonucleoprotein complex responsible for the synthesis of proteins in the cell. The small ribosomal subunit (SSU) binds messenger RNAs (mRNAs) and translates the encoded message by selecting cognate aminoacyl-transfer RNA (tRNA) molecules. The large subunit (LSU) contains the ribosomal catalytic site termed the peptidyl transferase center (PTC), which catalyzes the formation of peptide bonds, thereby polymerizing the amino acids delivered by tRNAs into a polypeptide chain. The nascent polypeptides leave the ribosome through a tunnel in the LSU and interact with protein factors that function in enzymatic processing, targeting, and the membrane insertion of nascent chains at the exit of the ribosomal tunnel. eS10 plays a role as a positive regulator of the GCN2 kinase activity by stimulating GCN1-mediated GCN2 activation. The chain is Small ribosomal subunit protein eS10A from Saccharomyces cerevisiae (strain ATCC 204508 / S288c) (Baker's yeast).